A 462-amino-acid polypeptide reads, in one-letter code: 7-hydroxymethyl chlorophyll a reductase, chloroplastic (462 aa).

The N-terminal 20 residues, 1–20, are a transit peptide targeting the chloroplast; the sequence is MITVVTSRLSLLPPVFSVVN.

Belongs to the FrhB family. In terms of assembly, interacts with SGR1, the chlorophyll catabolic enzymes (CCEs) NYC1, NOL and RCCR, and the LHCII complex. Part of a SGR1-CCE-LHCII complex, which acts in chlorophyll breakdown. Requires FAD as cofactor. Iron-sulfur cluster serves as cofactor.

Its subcellular location is the plastid. The protein localises to the chloroplast. It carries out the reaction chlorophyll a + 2 oxidized [2Fe-2S]-[ferredoxin] + H2O = 7(1)-hydroxychlorophyll a + 2 reduced [2Fe-2S]-[ferredoxin] + 2 H(+). Functionally, probable iron-sulfur flavoprotein that converts 7-hydroxymethyl chlorophyll a to chlorophyll a using ferredoxin as a reducing equivalent. Catalyzes the reduction of a hydroxymethyl group to a methyl group. Belongs to the chlorophyll catabolic enzymes (CCEs). The chain is 7-hydroxymethyl chlorophyll a reductase, chloroplastic (HCAR) from Arabidopsis thaliana (Mouse-ear cress).